Here is a 372-residue protein sequence, read N- to C-terminus: NAD(P)H-quinone oxidoreductase subunit 1 (372 aa).

8 helical membrane-spanning segments follow: residues 27 to 47, 97 to 117, 128 to 148, 176 to 196, 204 to 224, 266 to 286, 308 to 328, and 347 to 367; these read IIWLPIPMLLVLVAAVVGVLV, ILFTAGPILVLVPVILSWLIV, VGIGIFLWIALSSIQPIGLLM, LALSVLAIVLMTNSLSTIDIV, ILSWNIWRQPVGFIVFWICAL, ILSALLVSILYLGGWGFPIPV, SIGIVMTVLKAYLLVFIAILL, and FLLPISLANLLITAGLKLAFP.

It belongs to the complex I subunit 1 family. NDH-1 is composed of at least 11 different subunits.

The protein resides in the cellular thylakoid membrane. The enzyme catalyses a plastoquinone + NADH + (n+1) H(+)(in) = a plastoquinol + NAD(+) + n H(+)(out). It catalyses the reaction a plastoquinone + NADPH + (n+1) H(+)(in) = a plastoquinol + NADP(+) + n H(+)(out). Functionally, NDH-1 shuttles electrons from an unknown electron donor, via FMN and iron-sulfur (Fe-S) centers, to quinones in the respiratory and/or the photosynthetic chain. The immediate electron acceptor for the enzyme in this species is believed to be plastoquinone. Couples the redox reaction to proton translocation, and thus conserves the redox energy in a proton gradient. The chain is NAD(P)H-quinone oxidoreductase subunit 1 from Prochlorococcus marinus (strain MIT 9312).